The sequence spans 518 residues: Xylose import ATP-binding protein XylG (518 aa).

2 ABC transporter domains span residues 6–245 (LQMN…VGRE) and 262–507 (FEAR…LSQP). 38 to 45 (GENGAGKS) serves as a coordination point for ATP.

This sequence belongs to the ABC transporter superfamily. Xylose importer (TC 3.A.1.2.4) family. In terms of assembly, the complex is composed of two ATP-binding proteins (XylG), two transmembrane proteins (XylH) and a solute-binding protein (XylF).

The protein localises to the cell inner membrane. The catalysed reaction is D-xylose(out) + ATP + H2O = D-xylose(in) + ADP + phosphate + H(+). Part of the ABC transporter complex XylFGH involved in xylose import. Responsible for energy coupling to the transport system. In Pseudomonas fluorescens (strain Pf0-1), this protein is Xylose import ATP-binding protein XylG.